Here is a 142-residue protein sequence, read N- to C-terminus: Large ribosomal subunit protein uL11 (142 aa).

It belongs to the universal ribosomal protein uL11 family. In terms of assembly, part of the ribosomal stalk of the 50S ribosomal subunit. Interacts with L10 and the large rRNA to form the base of the stalk. L10 forms an elongated spine to which L12 dimers bind in a sequential fashion forming a multimeric L10(L12)X complex. In terms of processing, one or more lysine residues are methylated.

In terms of biological role, forms part of the ribosomal stalk which helps the ribosome interact with GTP-bound translation factors. This Brucella abortus (strain S19) protein is Large ribosomal subunit protein uL11.